Reading from the N-terminus, the 542-residue chain is Membrane protein insertase YidC (542 aa).

The next 6 membrane-spanning stretches (helical) occupy residues 6-26, 326-346, 350-370, 421-441, 458-478, and 501-521; these read NILLIGLLFVSFLLWQQWQTD, LVVDYGFLWWLAIPIHWLLMF, FVGNWGVAIILITLTVRGMLY, GGCLPILLQMPIFIALYWVLL, LSVQDPYYVLPLLMGVSMFLM, and VIFTVFFLWFPAGLVLYWLVG.

The protein belongs to the OXA1/ALB3/YidC family. Type 1 subfamily. Interacts with the Sec translocase complex via SecD. Specifically interacts with transmembrane segments of nascent integral membrane proteins during membrane integration.

The protein resides in the cell inner membrane. Its function is as follows. Required for the insertion and/or proper folding and/or complex formation of integral membrane proteins into the membrane. Involved in integration of membrane proteins that insert both dependently and independently of the Sec translocase complex, as well as at least some lipoproteins. Aids folding of multispanning membrane proteins. The chain is Membrane protein insertase YidC from Shewanella loihica (strain ATCC BAA-1088 / PV-4).